A 1210-amino-acid chain; its full sequence is Disease resistance-like protein DSC2 (1210 aa).

Residues W59–L223 form the TIR domain. E134 is a catalytic residue. Residues I241–H511 form the NB-ARC domain. LRR repeat units lie at residues A662–L685, K686–T709, L711–T732, A756–D780, M783–S804, T805–S828, L830–P848, D849–Q873, and L940–Q970.

The protein belongs to the disease resistance NB-LRR family. In terms of assembly, interacts with DSC1.

It catalyses the reaction NAD(+) + H2O = ADP-D-ribose + nicotinamide + H(+). Functionally, TIR-NB-LRR receptor-like protein involved in plant defense. Acts as a trigger of hypersensitive response (HR). Functions as a guard of CAMTA3, a negative regulator of immunity, during pathogen infection. In Arabidopsis thaliana (Mouse-ear cress), this protein is Disease resistance-like protein DSC2.